The chain runs to 208 residues: Ras-related protein M-Ras (208 aa).

14 residues coordinate GTP: Asp-21, Gly-22, Gly-23, Val-24, Gly-25, Lys-26, Ser-27, Ala-28, Phe-38, Val-39, Pro-40, Tyr-42, Pro-44, and Thr-45. Ser-27 lines the Mg(2+) pocket. The Effector region motif lies at Tyr-42 to Tyr-50. Mg(2+) is bound by residues Thr-45 and Asp-67. Gly-70, Asn-126, Lys-127, Asp-129, Ser-156, Ala-157, and Lys-158 together coordinate GTP. Cys-205 carries the cysteine methyl ester modification. A lipid anchor (S-geranylgeranyl cysteine) is attached at Cys-205. Positions Val-206–Leu-208 are cleaved as a propeptide — removed in mature form.

Belongs to the small GTPase superfamily. Ras family. Component of the SHOC2-MRAS-PP1c (SMP) holophosphatase complex consisting of SHOC2, GTP-bound M-Ras/MRAS and the catalytic subunit of protein phosphatase 1 (either PPP1CA, PPP1CB or PPP1CC). Interacts (active GTP-bound form) with both SHOC2 and PP1c (all isoforms) to form a tertiary complex; SHOC2 and PP1c preferably bind M-Ras/MRAS, but they also bind K-Ras/KRAS, N-Ras/NRAS and H-Ras/HRAS. Interacts with RGL3. Interacts (active GTP-bound form preferentially) with RGS14. Requires Mg(2+) as cofactor. Expression highly restricted to the brain and heart.

Its subcellular location is the cell membrane. The catalysed reaction is GTP + H2O = GDP + phosphate + H(+). Functionally, signal transducer in the Ras-MAPK signaling pathway that regulates cell proliferation and survival. Core component of the SHOC2-MRAS-PP1c (SMP) holophosphatase complex that regulates the MAPK pathway activation. The formation of the SMP complex only occurs when MRAS is GTP-bound. MRAS has low intrinsic GTPase activity and may require additional factors for activation. The SMP complex specifically dephosphorylates the inhibitory phosphorylation at 'Ser-259' of RAF1 kinase, 'Ser-365' of BRAF kinase and 'Ser-214' of ARAF kinase, stimulating their kinase activities. The chain is Ras-related protein M-Ras (MRAS) from Homo sapiens (Human).